We begin with the raw amino-acid sequence, 464 residues long: Cysteine--tRNA ligase (464 aa).

Cysteine 27 lines the Zn(2+) pocket. Residues 29–39 (PTVYDDAHLGH) carry the 'HIGH' region motif. Residues cysteine 203, histidine 234, and glutamate 238 each contribute to the Zn(2+) site. The 'KMSKS' region motif lies at 266 to 270 (KMSKS). Lysine 269 is an ATP binding site.

Belongs to the class-I aminoacyl-tRNA synthetase family. As to quaternary structure, monomer. It depends on Zn(2+) as a cofactor.

The protein localises to the cytoplasm. The catalysed reaction is tRNA(Cys) + L-cysteine + ATP = L-cysteinyl-tRNA(Cys) + AMP + diphosphate. The sequence is that of Cysteine--tRNA ligase from Campylobacter concisus (strain 13826).